The chain runs to 382 residues: Ribosomal RNA large subunit methyltransferase F (382 aa).

2 disordered regions span residues 1-53 (MTKP…LHRD) and 269-288 (NRAS…KSQL). The segment covering 8–24 (ASRKPVTKSGRNSKRSR) has biased composition (basic residues). Residues 269–286 (NRASKGHKLEPKAPKDKS) are compositionally biased toward basic and acidic residues.

The protein belongs to the methyltransferase superfamily. METTL16/RlmF family.

It is found in the cytoplasm. The catalysed reaction is adenosine(1618) in 23S rRNA + S-adenosyl-L-methionine = N(6)-methyladenosine(1618) in 23S rRNA + S-adenosyl-L-homocysteine + H(+). Its function is as follows. Specifically methylates the adenine in position 1618 of 23S rRNA. This chain is Ribosomal RNA large subunit methyltransferase F, found in Shewanella woodyi (strain ATCC 51908 / MS32).